We begin with the raw amino-acid sequence, 436 residues long: Trigger factor (436 aa).

Residues 161–246 enclose the PPIase FKBP-type domain; the sequence is DLRVNMDFVG…LNKVEKQDLP (86 aa).

It belongs to the FKBP-type PPIase family. Tig subfamily.

Its subcellular location is the cytoplasm. The catalysed reaction is [protein]-peptidylproline (omega=180) = [protein]-peptidylproline (omega=0). Involved in protein export. Acts as a chaperone by maintaining the newly synthesized protein in an open conformation. Functions as a peptidyl-prolyl cis-trans isomerase. In Tolumonas auensis (strain DSM 9187 / NBRC 110442 / TA 4), this protein is Trigger factor.